The following is a 128-amino-acid chain: LIM domain-containing protein 2 (128 aa).

An N-acetylmethionine modification is found at methionine 1. Residues 1–25 form a disordered region; sequence MFQAAGAAQATPSHEAKGSSGNSTV. Positions 39–99 constitute an LIM zinc-binding domain; sequence ETCAACQKTV…KPHFQQLFKS (61 aa). Zn(2+) is bound by residues cysteine 41, cysteine 44, histidine 62, cysteine 65, cysteine 68, cysteine 71, cysteine 89, and histidine 92.

Interacts with ILK.

Its subcellular location is the cytoplasm. The protein localises to the nucleus. Functionally, acts as an activator of the protein-kinase ILK, thereby regulating cell motility. This chain is LIM domain-containing protein 2 (Limd2), found in Rattus norvegicus (Rat).